A 746-amino-acid chain; its full sequence is Probably inactive copalyl diphosphate synthase 3 (746 aa).

The DXDD motif; degenerated signature appears at 331–334 (DVND).

It belongs to the terpene synthase family. Tpsc subfamily. As to expression, mostly expressed in stems, and, at low levels, in roots and leaves, but barely in flowers.

This chain is Probably inactive copalyl diphosphate synthase 3, found in Isodon rubescens (Rabdosia rubescens).